The primary structure comprises 299 residues: CCR4-NOT transcription complex subunit 9 (299 aa).

Belongs to the CNOT9 family. Homodimer. Component of the CCR4-NOT complex.

It localises to the nucleus. The protein resides in the cytoplasm. It is found in the P-body. Functionally, component of the CCR4-NOT complex which is one of the major cellular mRNA deadenylases and is linked to various cellular processes including bulk mRNA degradation, miRNA-mediated repression, translational repression during translational initiation and general transcription regulation. Additional complex functions may be a consequence of its influence on mRNA expression. Involved in down-regulation of MYB- and JUN-dependent transcription. Enhances ligand-dependent transcriptional activity of nuclear hormone receptors. May play a role in cell differentiation. This Xenopus tropicalis (Western clawed frog) protein is CCR4-NOT transcription complex subunit 9.